A 264-amino-acid chain; its full sequence is Cancer/testis antigen 55 (264 aa).

Residues 242 to 264 (SSSGFQDDGGLGRPKRERRSQSI) form a disordered region. The span at 254–264 (RPKRERRSQSI) shows a compositional bias: basic residues.

Interacts with GABARAP; this interaction may be important for GABARAP protein stability. Isoform 1 interacts with LAMP2; this interaction may be important for LAMP2 protein stability. Testis-specific. Expressed in spermatozoa (at protein level).

The protein localises to the cytoplasm. It localises to the cytoplasmic vesicle. The protein resides in the secretory vesicle. Its subcellular location is the acrosome. It is found in the cell projection. The protein localises to the cilium. It localises to the flagellum. Functionally, plays a role in spermatogenesis, possibly acting in the regulation of the autophagy pathway. This chain is Cancer/testis antigen 55 (CT55), found in Homo sapiens (Human).